A 780-amino-acid chain; its full sequence is Pendrin (780 aa).

At 1–87 (MAAPGGRSEP…YRVKEWLLSD (87 aa)) the chain is on the cytoplasmic side. The helical transmembrane segment at 88 to 108 (VISGVSTGLVATLQGMAYALL) threads the bilayer. Position 109 (A109) is a topological domain, extracellular. A helical membrane pass occupies residues 110–130 (AVPVGYGLYSAFFPILTYFIF). Topologically, residues 131–135 (GTSRH) are cytoplasmic. The chain crosses the membrane as a helical span at residues 136 to 156 (ISVGPFPVVSLMVGSVVLSMA). The Extracellular portion of the chain corresponds to 157-191 (PDEHFLVSSSNGTVLNTTMIDTAARDTARVLIASA). A helical transmembrane segment spans residues 192 to 212 (LTLLVGIIQLIFGGLQIGFIV). The Cytoplasmic portion of the chain corresponds to 213 to 218 (RYLADP). The helical transmembrane segment at 219-239 (LVGGFTTAAAFQVLVSQLKIV) threads the bilayer. The Extracellular portion of the chain corresponds to 240 to 263 (LNVSTKNYNGVLSIIYTLVEIFQN). Residues 264–284 (IGDTNLADFTAGLLTIVVCMA) traverse the membrane as a helical segment. The Cytoplasmic portion of the chain corresponds to 285–295 (VKELNDRFRHK). Residues 296 to 316 (IPVPIPIEVIVTIIATAISYG) form a helical membrane-spanning segment. At 317 to 344 (ANLEKNYNAGIVKSIPRGFLPPELPPVS) the chain is on the extracellular side. The helical transmembrane segment at 345–365 (LFSEMLAASFSIAVVAYAIAV) threads the bilayer. The Cytoplasmic segment spans residues 366-384 (SVGKVYATKYDYTIDGNQE). Residues 385–405 (FIAFGISNIFSGFFSCFVATT) form a helical membrane-spanning segment. Over 406–421 (ALSRTAVQESTGGKTQ) the chain is Extracellular. The helical transmembrane segment at 422 to 442 (VAGIISAAIVMIAILALGKLL) threads the bilayer. Residues 443–448 (EPLQKS) lie on the Cytoplasmic side of the membrane. The chain crosses the membrane as a helical span at residues 449 to 469 (VLAAVVIANLKGMFMQLCDIP). Residues 470–486 (RLWRQNKIDAVIWVFTC) are Extracellular-facing. Residues 487-507 (IVSIILGLDLGLLAGLIFGLL) traverse the membrane as a helical segment. Over 508-780 (TVVLRVQFPS…QDEAMRTLAS (273 aa)) the chain is Cytoplasmic. One can recognise an STAS domain in the interval 535–729 (NYKNIEEPQG…LTVHDAILYL (195 aa)).

It belongs to the SLC26A/SulP transporter (TC 2.A.53) family. Interacts with IQGAP1; this interaction enhances the chloride-bicarbonate exchange activity of SLC26A4. In terms of tissue distribution, highly expressed in the kidney (at protein level). High expression in adult thyroid, lower expression in adult and fetal kidney and fetal brain. Not expressed in other tissues.

Its subcellular location is the cell membrane. It is found in the apical cell membrane. It carries out the reaction chloride(in) = chloride(out). The enzyme catalyses iodide(out) = iodide(in). The catalysed reaction is hydrogencarbonate(in) + chloride(out) = hydrogencarbonate(out) + chloride(in). It catalyses the reaction iodide(in) + hydrogencarbonate(out) = iodide(out) + hydrogencarbonate(in). It carries out the reaction iodide(in) + chloride(out) = iodide(out) + chloride(in). The enzyme catalyses formate(in) + chloride(out) = formate(out) + chloride(in). Its function is as follows. Sodium-independent transporter of chloride and iodide. Mediates electroneutral chloride-bicarbonate, chloride-iodide and chloride-formate exchange with 1:1 stoichiometry. Mediates electroneutral iodide-bicarbonate exchange. The polypeptide is Pendrin (SLC26A4) (Homo sapiens (Human)).